A 208-amino-acid chain; its full sequence is Ribosomal RNA large subunit methyltransferase E (208 aa).

Residues glycine 62, tryptophan 64, aspartate 82, aspartate 98, and aspartate 123 each contribute to the S-adenosyl-L-methionine site. Lysine 163 (proton acceptor) is an active-site residue.

The protein belongs to the class I-like SAM-binding methyltransferase superfamily. RNA methyltransferase RlmE family.

The protein resides in the cytoplasm. The enzyme catalyses uridine(2552) in 23S rRNA + S-adenosyl-L-methionine = 2'-O-methyluridine(2552) in 23S rRNA + S-adenosyl-L-homocysteine + H(+). In terms of biological role, specifically methylates the uridine in position 2552 of 23S rRNA at the 2'-O position of the ribose in the fully assembled 50S ribosomal subunit. The sequence is that of Ribosomal RNA large subunit methyltransferase E from Idiomarina loihiensis (strain ATCC BAA-735 / DSM 15497 / L2-TR).